Reading from the N-terminus, the 331-residue chain is Ketol-acid reductoisomerase (NADP(+)) (331 aa).

The KARI N-terminal Rossmann domain occupies 2–182 (ARMYYDEDAN…GGTRGGVLET (181 aa)). NADP(+) contacts are provided by residues 25-28 (YGSQ), Ser51, Ser53, and 83-86 (DEVQ). Residue His108 is part of the active site. Gly134 contacts NADP(+). The KARI C-terminal knotted domain occupies 183–328 (TFREETETDL…KDLRAMFSWL (146 aa)). Mg(2+) contacts are provided by Asp191, Glu195, Glu227, and Glu231. Ser252 provides a ligand contact to substrate.

This sequence belongs to the ketol-acid reductoisomerase family. Mg(2+) is required as a cofactor.

The catalysed reaction is (2R)-2,3-dihydroxy-3-methylbutanoate + NADP(+) = (2S)-2-acetolactate + NADPH + H(+). It catalyses the reaction (2R,3R)-2,3-dihydroxy-3-methylpentanoate + NADP(+) = (S)-2-ethyl-2-hydroxy-3-oxobutanoate + NADPH + H(+). It participates in amino-acid biosynthesis; L-isoleucine biosynthesis; L-isoleucine from 2-oxobutanoate: step 2/4. It functions in the pathway amino-acid biosynthesis; L-valine biosynthesis; L-valine from pyruvate: step 2/4. In terms of biological role, involved in the biosynthesis of branched-chain amino acids (BCAA). Catalyzes an alkyl-migration followed by a ketol-acid reduction of (S)-2-acetolactate (S2AL) to yield (R)-2,3-dihydroxy-isovalerate. In the isomerase reaction, S2AL is rearranged via a Mg-dependent methyl migration to produce 3-hydroxy-3-methyl-2-ketobutyrate (HMKB). In the reductase reaction, this 2-ketoacid undergoes a metal-dependent reduction by NADPH to yield (R)-2,3-dihydroxy-isovalerate. This is Ketol-acid reductoisomerase (NADP(+)) from Trichormus variabilis (strain ATCC 29413 / PCC 7937) (Anabaena variabilis).